Consider the following 295-residue polypeptide: Small ribosomal subunit protein uS2 (295 aa).

The interval 273–295 is disordered; it reads WAASSAPAAETLADPAADPSVKW. Residues 274-295 show a composition bias toward low complexity; it reads AASSAPAAETLADPAADPSVKW.

This sequence belongs to the universal ribosomal protein uS2 family. As to quaternary structure, component of the small ribosomal subunit. Mature ribosomes consist of a small (40S) and a large (60S) subunit. The 40S subunit contains about 33 different proteins and 1 molecule of RNA (18S). The 60S subunit contains about 49 different proteins and 3 molecules of RNA (25S, 5.8S and 5S). Interacts with RPS21.

It localises to the cytoplasm. In terms of biological role, required for the assembly and/or stability of the 40S ribosomal subunit. Required for the processing of the 20S rRNA-precursor to mature 18S rRNA in a late step of the maturation of 40S ribosomal subunits. This Paracoccidioides lutzii (strain ATCC MYA-826 / Pb01) (Paracoccidioides brasiliensis) protein is Small ribosomal subunit protein uS2.